A 366-amino-acid chain; its full sequence is Aminomethyltransferase (366 aa).

It belongs to the GcvT family. The glycine cleavage system is composed of four proteins: P, T, L and H.

It catalyses the reaction N(6)-[(R)-S(8)-aminomethyldihydrolipoyl]-L-lysyl-[protein] + (6S)-5,6,7,8-tetrahydrofolate = N(6)-[(R)-dihydrolipoyl]-L-lysyl-[protein] + (6R)-5,10-methylene-5,6,7,8-tetrahydrofolate + NH4(+). In terms of biological role, the glycine cleavage system catalyzes the degradation of glycine. In Bacillus mycoides (strain KBAB4) (Bacillus weihenstephanensis), this protein is Aminomethyltransferase.